Here is a 337-residue protein sequence, read N- to C-terminus: Lipoyl synthase (337 aa).

[4Fe-4S] cluster-binding residues include cysteine 81, cysteine 86, cysteine 92, cysteine 107, cysteine 111, cysteine 114, and serine 323. One can recognise a Radical SAM core domain in the interval phenylalanine 93–serine 312.

It belongs to the radical SAM superfamily. Lipoyl synthase family. The cofactor is [4Fe-4S] cluster.

The protein localises to the cytoplasm. The catalysed reaction is [[Fe-S] cluster scaffold protein carrying a second [4Fe-4S](2+) cluster] + N(6)-octanoyl-L-lysyl-[protein] + 2 oxidized [2Fe-2S]-[ferredoxin] + 2 S-adenosyl-L-methionine + 4 H(+) = [[Fe-S] cluster scaffold protein] + N(6)-[(R)-dihydrolipoyl]-L-lysyl-[protein] + 4 Fe(3+) + 2 hydrogen sulfide + 2 5'-deoxyadenosine + 2 L-methionine + 2 reduced [2Fe-2S]-[ferredoxin]. It participates in protein modification; protein lipoylation via endogenous pathway; protein N(6)-(lipoyl)lysine from octanoyl-[acyl-carrier-protein]: step 2/2. Its function is as follows. Catalyzes the radical-mediated insertion of two sulfur atoms into the C-6 and C-8 positions of the octanoyl moiety bound to the lipoyl domains of lipoate-dependent enzymes, thereby converting the octanoylated domains into lipoylated derivatives. This Xanthomonas campestris pv. campestris (strain 8004) protein is Lipoyl synthase.